Here is a 486-residue protein sequence, read N- to C-terminus: UDP-N-acetylmuramoyl-L-alanyl-D-glutamate--2,6-diaminopimelate ligase (486 aa).

Serine 30 lines the UDP-N-acetyl-alpha-D-muramoyl-L-alanyl-D-glutamate pocket. ATP is bound at residue 112–118 (GTNGKTT). Residues 154–155 (TT), serine 181, glutamine 187, and arginine 189 contribute to the UDP-N-acetyl-alpha-D-muramoyl-L-alanyl-D-glutamate site. The residue at position 221 (lysine 221) is an N6-carboxylysine. Residues arginine 378, 402–405 (DNPR), glycine 455, and glutamate 459 each bind meso-2,6-diaminopimelate. The Meso-diaminopimelate recognition motif motif lies at 402–405 (DNPR).

This sequence belongs to the MurCDEF family. MurE subfamily. The cofactor is Mg(2+). In terms of processing, carboxylation is probably crucial for Mg(2+) binding and, consequently, for the gamma-phosphate positioning of ATP.

The protein localises to the cytoplasm. The catalysed reaction is UDP-N-acetyl-alpha-D-muramoyl-L-alanyl-D-glutamate + meso-2,6-diaminopimelate + ATP = UDP-N-acetyl-alpha-D-muramoyl-L-alanyl-gamma-D-glutamyl-meso-2,6-diaminopimelate + ADP + phosphate + H(+). Its pathway is cell wall biogenesis; peptidoglycan biosynthesis. In terms of biological role, catalyzes the addition of meso-diaminopimelic acid to the nucleotide precursor UDP-N-acetylmuramoyl-L-alanyl-D-glutamate (UMAG) in the biosynthesis of bacterial cell-wall peptidoglycan. This Cytophaga hutchinsonii (strain ATCC 33406 / DSM 1761 / CIP 103989 / NBRC 15051 / NCIMB 9469 / D465) protein is UDP-N-acetylmuramoyl-L-alanyl-D-glutamate--2,6-diaminopimelate ligase.